Here is a 321-residue protein sequence, read N- to C-terminus: Anthranilate phosphoribosyltransferase (321 aa).

Residues Gly72, 75-76 (GD), Thr80, 82-85 (NVST), 99-107 (KHGNVSITS), and Ser111 each bind 5-phospho-alpha-D-ribose 1-diphosphate. Residue Gly72 participates in anthranilate binding. Residue Ser84 coordinates Mg(2+). Residue Asn102 coordinates anthranilate. Arg157 provides a ligand contact to anthranilate. The Mg(2+) site is built by Asp216 and Glu217.

Belongs to the anthranilate phosphoribosyltransferase family. As to quaternary structure, homodimer. It depends on Mg(2+) as a cofactor.

The catalysed reaction is N-(5-phospho-beta-D-ribosyl)anthranilate + diphosphate = 5-phospho-alpha-D-ribose 1-diphosphate + anthranilate. Its pathway is amino-acid biosynthesis; L-tryptophan biosynthesis; L-tryptophan from chorismate: step 2/5. In terms of biological role, catalyzes the transfer of the phosphoribosyl group of 5-phosphorylribose-1-pyrophosphate (PRPP) to anthranilate to yield N-(5'-phosphoribosyl)-anthranilate (PRA). This is Anthranilate phosphoribosyltransferase from Methanococcus maripaludis (strain C5 / ATCC BAA-1333).